Reading from the N-terminus, the 790-residue chain is cAMP and cAMP-inhibited cGMP 3',5'-cyclic phosphodiesterase 10A (790 aa).

3',5'-cyclic AMP is bound by residues 290 to 291, 334 to 335, T368, Q387, and H519; these read RC and IA. The region spanning 446–763 is the PDEase domain; that stretch reads TSEEWQGLMR…NQWEKVIRGE (318 aa). The Proton donor role is filled by H519. H519 contacts 3',5'-cyclic GMP. Residues H523, H557, D558, and D668 each contribute to the a divalent metal cation site. Q720 is a 3',5'-cyclic AMP binding site. 3',5'-cyclic GMP is bound at residue Q720. The tract at residues 768-790 is disordered; it reads WISGPGPAPSKSTPEKLNVKVED. A compositionally biased stretch (basic and acidic residues) spans 780 to 790; the sequence is TPEKLNVKVED.

The protein belongs to the cyclic nucleotide phosphodiesterase family. Homodimer. Requires a divalent metal cation as cofactor. As to expression, detected in striatum (at protein level). Detected in testis and brain.

The protein localises to the cytoplasm. It is found in the cytosol. It catalyses the reaction a nucleoside 3',5'-cyclic phosphate + H2O = a nucleoside 5'-phosphate + H(+). The catalysed reaction is 3',5'-cyclic AMP + H2O = AMP + H(+). It carries out the reaction 3',5'-cyclic GMP + H2O = GMP + H(+). It functions in the pathway purine metabolism; 3',5'-cyclic AMP degradation; AMP from 3',5'-cyclic AMP: step 1/1. It participates in purine metabolism; 3',5'-cyclic GMP degradation; GMP from 3',5'-cyclic GMP: step 1/1. Its function is as follows. Plays a role in signal transduction by regulating the intracellular concentration of cyclic nucleotides. Can hydrolyze both cAMP and cGMP, but has higher affinity for cAMP and is more efficient with cAMP as substrate. May play a critical role in regulating cAMP and cGMP levels in the striatum, a region of the brain that contributes to the control of movement and cognition. This is cAMP and cAMP-inhibited cGMP 3',5'-cyclic phosphodiesterase 10A (Pde10a) from Mus musculus (Mouse).